Reading from the N-terminus, the 379-residue chain is Histidinol-phosphate aminotransferase (379 aa).

Lys236 carries the post-translational modification N6-(pyridoxal phosphate)lysine.

It belongs to the class-II pyridoxal-phosphate-dependent aminotransferase family. Histidinol-phosphate aminotransferase subfamily. As to quaternary structure, homodimer. Requires pyridoxal 5'-phosphate as cofactor.

It carries out the reaction L-histidinol phosphate + 2-oxoglutarate = 3-(imidazol-4-yl)-2-oxopropyl phosphate + L-glutamate. It participates in amino-acid biosynthesis; L-histidine biosynthesis; L-histidine from 5-phospho-alpha-D-ribose 1-diphosphate: step 7/9. This is Histidinol-phosphate aminotransferase from Desulfotalea psychrophila (strain LSv54 / DSM 12343).